We begin with the raw amino-acid sequence, 133 residues long: ATP synthase epsilon chain (133 aa).

Belongs to the ATPase epsilon chain family. In terms of assembly, F-type ATPases have 2 components, CF(1) - the catalytic core - and CF(0) - the membrane proton channel. CF(1) has five subunits: alpha(3), beta(3), gamma(1), delta(1), epsilon(1). CF(0) has three main subunits: a, b and c.

It localises to the cell membrane. Functionally, produces ATP from ADP in the presence of a proton gradient across the membrane. This is ATP synthase epsilon chain from Bacillus mycoides (strain KBAB4) (Bacillus weihenstephanensis).